Consider the following 304-residue polypeptide: Type II methyltransferase M.HindV (304 aa).

Residues 1–299 enclose the SAM-dependent MTase C5-type domain; the sequence is MKCVDLFSGC…SAIINFEKEP (299 aa). The active site involves Cys75.

This sequence belongs to the class I-like SAM-binding methyltransferase superfamily. C5-methyltransferase family.

The enzyme catalyses a 2'-deoxycytidine in DNA + S-adenosyl-L-methionine = a 5-methyl-2'-deoxycytidine in DNA + S-adenosyl-L-homocysteine + H(+). Functionally, a methylase, recognizes the double-stranded sequence 5'-GRCGYC-3', methylates C-? on both strands, and protects the DNA from cleavage by the HindV endonuclease. In Haemophilus influenzae (strain ATCC 51907 / DSM 11121 / KW20 / Rd), this protein is Type II methyltransferase M.HindV (hindVM).